The chain runs to 510 residues: MVKLEVYLEKQKFRQQYFVYPLLFQEYIYAFAHDHGLNGSEPVEILGRNNNKFSSVLVKRLIIRMYQQNFGINSVNHPNQNRLLDHNNYFYSQFYSHILSEGFAIVVEIPFSLRVLSCPEEKEIPKFQNLRSIHSLFPFLEDQFLHLHYISHIEIPYPIHLEIVVQLLQCRIQDVASLHLLRFFLNYYSNWNSLIISMKLIFLLKKENKRLFRFLYNSYVSECEFFFFFLRKQSSCLRLTSYGTFLERIHFYRKKEHFWVMYPGFFRKTLWVFMDPLMHYVRYQGKAILASKGTPLLMKKWKCYLANFWQYYFHFWIQPRRIQQKPLANSCFDFLGYLSSVTRNPLVVRNQMLENAFLIDTRIKKLDTIVPAISLIGSLSKAQFCTGSGHPISKPIWTDLSDWDILDRFGRICRNIFHYYSGSSKKQTLYRIKYILRLSCARTLARKHKSTVRTFMQRLGSVFLEEFFTEEEQVLSLIFTKTIPFSFHGSHSKRIWYLDIIRINDLVNYS.

Belongs to the intron maturase 2 family. MatK subfamily.

The protein localises to the plastid. The protein resides in the chloroplast. Functionally, usually encoded in the trnK tRNA gene intron. Probably assists in splicing its own and other chloroplast group II introns. This is Maturase K from Anomochloa marantoidea (Herbaceous bamboo).